The sequence spans 403 residues: CCA-adding enzyme (403 aa).

ATP-binding residues include G32 and R35. 2 residues coordinate CTP: G32 and R35. Residues D45 and D47 each coordinate Mg(2+). Residues R116, D159, R162, R165, and R168 each contribute to the ATP site. CTP-binding residues include R116, D159, R162, R165, and R168.

The protein belongs to the tRNA nucleotidyltransferase/poly(A) polymerase family. Bacterial CCA-adding enzyme type 3 subfamily. Homodimer. Mg(2+) is required as a cofactor.

The catalysed reaction is a tRNA precursor + 2 CTP + ATP = a tRNA with a 3' CCA end + 3 diphosphate. The enzyme catalyses a tRNA with a 3' CCA end + 2 CTP + ATP = a tRNA with a 3' CCACCA end + 3 diphosphate. Catalyzes the addition and repair of the essential 3'-terminal CCA sequence in tRNAs without using a nucleic acid template. Adds these three nucleotides in the order of C, C, and A to the tRNA nucleotide-73, using CTP and ATP as substrates and producing inorganic pyrophosphate. tRNA 3'-terminal CCA addition is required both for tRNA processing and repair. Also involved in tRNA surveillance by mediating tandem CCA addition to generate a CCACCA at the 3' terminus of unstable tRNAs. While stable tRNAs receive only 3'-terminal CCA, unstable tRNAs are marked with CCACCA and rapidly degraded. The sequence is that of CCA-adding enzyme from Streptococcus uberis (strain ATCC BAA-854 / 0140J).